The chain runs to 138 residues: Phospholipase A2 crotoxin basic chain CBa2 (138 aa).

An N-terminal signal peptide occupies residues 1-16 (MRALWIVAVLLVGVEG). 7 cysteine pairs are disulfide-bonded: C42–C131, C44–C60, C59–C111, C65–C138, C66–C104, C73–C97, and C91–C102. 3 residues coordinate Ca(2+): Y43, G45, and G47. H63 is an active-site residue. A Ca(2+)-binding site is contributed by D64. Residue D105 is part of the active site.

This sequence belongs to the phospholipase A2 family. Group II subfamily. D49 sub-subfamily. As to quaternary structure, heterodimer of one of the acidic (CA1, CA2, CA3 or CA4) and one of the basic (CBa1, CBa2, CBb, CBc or CBd) subunits; non-covalently linked. The acidic subunit is non-toxic, without enzymatic activity and comprises 3 peptides that are cross-linked by 5 disulfide bridges. The basic subunit is toxic, has phospholipase A2 activity and is composed of a single chain. Multiple variants of each subunit give different crotoxin complexes that can be subdivided into 2 classes: (1) those of high toxicity, low PLA2 activity (CBb, CBc and CBd linked with high affinity to any CA) and high stability (K(d)=4.5 nM) and (2) those of moderate toxicity, high PLA2 activity (CBa2 linked with low affinity to any CA) and low stability (K(d)=25 nM). Interacts with human NBD1 domain of CFTR. Ca(2+) is required as a cofactor. As to expression, expressed by the venom gland.

The protein resides in the secreted. The catalysed reaction is a 1,2-diacyl-sn-glycero-3-phosphocholine + H2O = a 1-acyl-sn-glycero-3-phosphocholine + a fatty acid + H(+). Heterodimer CA-CB: Crotoxin is a potent presynaptic neurotoxin that possesses phospholipase A2 (PLA2) activity and exerts a lethal action by blocking neuromuscular transmission. It consists of a non-covalent association of a basic and weakly toxic PLA2 subunit (CBa2, CBb, CBc, or CBd), with a small acidic, non-enzymatic and non-toxic subunit (CA1, CA2, CA3 or CA4). The complex acts by binding to a specific 48-kDa protein (R48) receptor located on presynaptic membranes, forming a transient ternary complex CA-CB-R48, followed by dissociation of the CA-CB complex and release of the CA subunit. At equilibrium, only the CB subunits remain associated with the specific crotoxin receptor. In addition to neurotoxicity, crotoxin has been found to exert myotoxicity, nephrotoxicity, and cardiovascular toxicity. Moreover, anti-inflammatory, immunomodulatory, anti-tumor and analgesic effects of crotoxin have also been reported. Its function is as follows. Monomer CBa2: The basic subunit of crotoxin is a snake venom phospholipase A2 (PLA2) that exhibits weak neurotoxicity (10-fold less than the heterodimer) and strong anticoagulant effects by binding to factor Xa (F10) and inhibiting the prothrombinase activity (IC(50) is 41 nM). In addition, it shows the same effects described for the heterodimer and binds the nucleotide-binding domain (NBD1) of CFTR chloride channels and increases the channel current. PLA2 catalyzes the calcium-dependent hydrolysis of the 2-acyl groups in 3-sn-phosphoglycerides. This Crotalus durissus terrificus (South American rattlesnake) protein is Phospholipase A2 crotoxin basic chain CBa2.